We begin with the raw amino-acid sequence, 150 residues long: Ribosome maturation factor RimP (150 aa).

This sequence belongs to the RimP family.

The protein resides in the cytoplasm. Functionally, required for maturation of 30S ribosomal subunits. This chain is Ribosome maturation factor RimP, found in Thermotoga petrophila (strain ATCC BAA-488 / DSM 13995 / JCM 10881 / RKU-1).